The chain runs to 348 residues: Rhodopsin (348 aa).

An N-acetylmethionine modification is found at M1. The Extracellular portion of the chain corresponds to 1-36; it reads MNGTEGPNFYVPFSNKTGVVRSPFEYPQYYLAEPWQ. Residues N2 and N15 are each glycosylated (N-linked (GlcNAc...) asparagine). A helical transmembrane segment spans residues 37–61; the sequence is FSMLAAYMFLLIVLGFPINFLTLYV. At 62–73 the chain is on the cytoplasmic side; that stretch reads TVQHKKLRTPLN. A helical transmembrane segment spans residues 74 to 96; the sequence is YILLNLAVADLFMVFGGFTTTLY. Residues 97-110 lie on the Extracellular side of the membrane; sequence TSLHGYFVFGPTGC. A disulfide bond links C110 and C187. Residues 111-133 form a helical membrane-spanning segment; it reads NLEGFFATLGGEIALWSLVVLAI. The short motif at 134–136 is the 'Ionic lock' involved in activated form stabilization element; sequence ERY. At 134–152 the chain is on the cytoplasmic side; it reads ERYVVVCKPMSNFRFGENH. A helical membrane pass occupies residues 153 to 173; it reads AIMGVAFTWVMALACAAPPLV. The Extracellular segment spans residues 174-202; that stretch reads GWSRYIPEGMQCSCGIDYYTLKPEVNNES. A Zn(2+)-binding site is contributed by E201. A helical membrane pass occupies residues 203 to 224; the sequence is FVIYMFVVHFTIPMIVIFFCYG. At 225–252 the chain is on the cytoplasmic side; it reads QLVFTVKEAAAQQQESATTQKAEKEVTR. Residues 253–274 traverse the membrane as a helical segment; sequence MVIIMVIAFLICWVPYASVAFY. Residues 275 to 286 lie on the Extracellular side of the membrane; it reads IFTHQGSNFGPI. A Zn(2+)-binding site is contributed by Q279. Residues 287–308 form a helical membrane-spanning segment; that stretch reads FMTLPAFFAKSSSIYNPVIYIM. N6-(retinylidene)lysine is present on K296. Residues 309-348 are Cytoplasmic-facing; that stretch reads MNKQFRNCMLTTLCCGKNPLGDDEASTTGSKTETSQVAPA. S-palmitoyl cysteine attachment occurs at residues C322 and C323. Residues 330-348 are interaction with SAG; it reads DDEASTTGSKTETSQVAPA. S334 carries the post-translational modification Phosphoserine. 2 positions are modified to phosphothreonine: T335 and T336. Position 338 is a phosphoserine (S338). Phosphothreonine is present on residues T340 and T342. Position 343 is a phosphoserine (S343).

This sequence belongs to the G-protein coupled receptor 1 family. Opsin subfamily. As to quaternary structure, homodimer. May form a complex composed of RHO, GRK1 and RCVRN in a Ca(2+)-dependent manner; RCVRN prevents the interaction between GRK1 and RHO. Interacts with GRK1. Interacts (phosphorylated form) with SAG. Interacts with GNAT1. Interacts with GNAT3. SAG and G-proteins compete for a common binding site. Interacts with PRCD; the interaction promotes PRCD stability. Forms a complex with ASAP1 and ARF4. Forms a complex with ASAP1, RAB11A, Rabin8/RAB3IP, ARF4 and RAB11FIP3; the complex regulates Golgi-to-cilia rhodopsin/RHO transport in photoreceptors. In terms of processing, phosphorylated on some or all of the serine and threonine residues present in the C-terminal region. Contains one covalently linked retinal chromophore. Upon light absorption, the covalently bound 11-cis-retinal is converted to all-trans-retinal. After hydrolysis of the Schiff base and release of the covalently bound all-trans-retinal, active rhodopsin is regenerated by binding of a fresh molecule of 11-cis-retinal.

It localises to the membrane. The protein resides in the cell projection. It is found in the cilium. The protein localises to the photoreceptor outer segment. Its function is as follows. Photoreceptor required for image-forming vision at low light intensity. Required for photoreceptor cell viability after birth. Light-induced isomerization of 11-cis to all-trans retinal triggers a conformational change that activates signaling via G-proteins. Subsequent receptor phosphorylation mediates displacement of the bound G-protein alpha subunit by the arrestin SAG and terminates signaling. This chain is Rhodopsin (RHO), found in Felis catus (Cat).